A 255-amino-acid chain; its full sequence is Enkurin (255 aa).

The span at 1–10 (MDSPCTSESI) shows a compositional bias: polar residues. 2 disordered regions span residues 1–25 (MDSP…PQHP) and 67–96 (SKEK…DHPV). The segment covering 73-83 (PPKKKFNRCSP) has biased composition (basic residues). Positions 83-89 (PKKPAVP) match the SH3-binding motif. Positions 160 to 252 (KRNEDVKKAQ…VIEKHKIIYI (93 aa)) constitute an Enkurin domain. Residues 160–255 (KRNEDVKKAQ…KHKIIYIANK (96 aa)) are interaction with TRPC proteins. The IQ domain maps to 176–187 (IQENLKKAAMKR).

In terms of assembly, microtubule inner protein component of sperm flagellar doublet microtubules. Binds calmodulin via its IQ domain. Interacts with TRPC1, TRPC2, TRPC5, but not TRPC3. Interacts with CFAP45. As to expression, high expression in testis and vomeronasal organ and lower expression in ovary, heart, lung, and brain. Not expressed in other tissues.

Its subcellular location is the cytoplasm. It localises to the cytoskeleton. The protein localises to the cilium axoneme. It is found in the flagellum axoneme. Functionally, adapter that functions to localize a calcium-sensitive signal transduction machinery in sperm to a calcium-permeable ion channel. Microtubule inner protein (MIP) part of the dynein-decorated doublet microtubules (DMTs) in cilia axoneme, which is required for motile cilia beating. This Mus musculus (Mouse) protein is Enkurin (Enkur).